Reading from the N-terminus, the 383-residue chain is Erythronate-4-phosphate dehydrogenase (383 aa).

2 residues coordinate substrate: Ser-45 and Thr-67. Asp-147 provides a ligand contact to NAD(+). Arg-208 is a catalytic residue. Asp-232 provides a ligand contact to NAD(+). Residue Glu-237 is part of the active site. The Proton donor role is filled by His-254. Gly-257 lines the NAD(+) pocket. Tyr-258 serves as a coordination point for substrate.

This sequence belongs to the D-isomer specific 2-hydroxyacid dehydrogenase family. PdxB subfamily. In terms of assembly, homodimer.

It localises to the cytoplasm. It carries out the reaction 4-phospho-D-erythronate + NAD(+) = (R)-3-hydroxy-2-oxo-4-phosphooxybutanoate + NADH + H(+). It participates in cofactor biosynthesis; pyridoxine 5'-phosphate biosynthesis; pyridoxine 5'-phosphate from D-erythrose 4-phosphate: step 2/5. In terms of biological role, catalyzes the oxidation of erythronate-4-phosphate to 3-hydroxy-2-oxo-4-phosphonooxybutanoate. The protein is Erythronate-4-phosphate dehydrogenase of Psychromonas ingrahamii (strain DSM 17664 / CCUG 51855 / 37).